A 498-amino-acid chain; its full sequence is Glutamate--tRNA ligase (498 aa).

The 'HIGH' region motif lies at 11 to 21 (PSPTGHLHIGN). The short motif at 261–265 (KLSKR) is the 'KMSKS' region element. An ATP-binding site is contributed by K264.

It belongs to the class-I aminoacyl-tRNA synthetase family. Glutamate--tRNA ligase type 1 subfamily. Monomer.

It localises to the cytoplasm. The catalysed reaction is tRNA(Glu) + L-glutamate + ATP = L-glutamyl-tRNA(Glu) + AMP + diphosphate. In terms of biological role, catalyzes the attachment of glutamate to tRNA(Glu) in a two-step reaction: glutamate is first activated by ATP to form Glu-AMP and then transferred to the acceptor end of tRNA(Glu). The protein is Glutamate--tRNA ligase of Oenococcus oeni (strain ATCC BAA-331 / PSU-1).